A 174-amino-acid polypeptide reads, in one-letter code: Regenerating islet-derived protein 3-gamma (174 aa).

The first 26 residues, 1–26 (MLPRITITIMSWMLLSCLMLLSQVQG), serve as a signal peptide directing secretion. Positions 27-37 (EVAKKDAPSSR) are excised as a propeptide. Intrachain disulfides connect cysteine 40-cysteine 51, cysteine 68-cysteine 170, and cysteine 145-cysteine 162. The region spanning 47–171 (YGSYCYALFS…CNLELPYVCK (125 aa)) is the C-type lectin domain. The sufficient to activate EXTL3 stretch occupies residues 103–118 (WIGLHDPTLGYEPNRG). Position 107 (histidine 107) interacts with Zn(2+). Residues 114–116 (EPN) carry the EPN motif. Positions 121 and 144 each coordinate Zn(2+).

In terms of assembly, forms a hexameric membrane-permeabilizing oligomeric pore on membrane phospholipids. The hexamer is formed by three dimers related by helical symmetry. Forms filaments, filamentation traps pore complexes and limits damage to host cells. Interacts with EXTL3. Proteolytic processing by trypsin removes an inhibitory N-terminal propeptide and is essential for peptidoglycan binding and antibacterial activity. Predominantly expressed in the small intestine, including Paneth cells (at protein level). Hardly detectable in the colon (at protein level). Highly expressed in the lung epithelium during methicillin-resistant S.aureus infection and allergic airway inflammation (at protein level). Skin injury increases its epidermal expression. Also expressed in the pancreas. Expressed by nocireceptors.

The protein resides in the secreted. Its subcellular location is the cytoplasm. Lipopolysaccharide inhibits pore-forming activity, explaining why is bactericidal for Gram-positive but not Gram-negative bacteria. Functionally, bactericidal C-type lectin which acts exclusively against Gram-positive bacteria and mediates bacterial killing by binding to surface-exposed carbohydrate moieties of peptidoglycan. Restricts bacterial colonization of the intestinal epithelial surface and consequently limits activation of adaptive immune responses by the microbiota. Acts as a hormone in response to different stimuli like anti-inflammatory signals, such as IL17A, or gut microbiome. Is secreted by different cell types to activate its receptor EXTL3 and induce cell specific signaling pathways. Induced by IL17A in keratinocytes, regulates keratinocyte proliferation and differentiation after skin injury. In parallel, inhibits skin inflammation through the inhibition of inflammatory cytokines such as IL6 and TNF. Induced by IL22 in lung epithelial cells, inhibits cytokine production and regulates allergic airway inflammation. Induced in small intestine by inulin-enriched diet and Lactobacillus gasseri enriched microbiome, plays a role in the improvement of gut barrier function, the regulation of energy balance and glucose levels. Modulates microbiota composition in duodenal contents. Produced by nociceptor in response to endotoxins, prevents endotoxic death by targeting kynurenine pathway in microglia. In terms of biological role, has bacteriostatic activity. Its function is as follows. Has bactericidal activity against L.monocytogenes and methicillin-resistant S.aureus. This Mus musculus (Mouse) protein is Regenerating islet-derived protein 3-gamma.